The chain runs to 182 residues: UPF0200 protein Mboo_1593 (182 aa).

Residue 8-15 (GLPASGKG) participates in ATP binding.

The protein belongs to the UPF0200 family.

In Methanoregula boonei (strain DSM 21154 / JCM 14090 / 6A8), this protein is UPF0200 protein Mboo_1593.